The chain runs to 349 residues: Small ribosomal subunit biogenesis GTPase RsgA (349 aa).

The span at 1–11 (MSKKKLSKGQQ) shows a compositional bias: basic residues. Positions 1–29 (MSKKKLSKGQQRRVSANHQRRLKKTESKV) are disordered. In terms of domain architecture, CP-type G spans 102-272 (HSVLTRPDYY…VIDSPGVREF (171 aa)). Residues 158 to 161 (NKID) and 212 to 220 (GQSGVGKSS) contribute to the GTP site. The Zn(2+) site is built by C296, C301, H303, and C309.

This sequence belongs to the TRAFAC class YlqF/YawG GTPase family. RsgA subfamily. Monomer. Associates with 30S ribosomal subunit, binds 16S rRNA. It depends on Zn(2+) as a cofactor.

Its subcellular location is the cytoplasm. Its function is as follows. One of several proteins that assist in the late maturation steps of the functional core of the 30S ribosomal subunit. Helps release RbfA from mature subunits. May play a role in the assembly of ribosomal proteins into the subunit. Circularly permuted GTPase that catalyzes slow GTP hydrolysis, GTPase activity is stimulated by the 30S ribosomal subunit. The chain is Small ribosomal subunit biogenesis GTPase RsgA from Pectobacterium atrosepticum (strain SCRI 1043 / ATCC BAA-672) (Erwinia carotovora subsp. atroseptica).